The sequence spans 92 residues: MAFIKRSDKKKKPFKKESSLFKRKRYCRFTVAGVEQIDYKDLDTLKDFIGDNGKITPARLTGTKAHYQRQLNTAIKRARFLALLPYTDLHKH.

The protein belongs to the bacterial ribosomal protein bS18 family. In terms of assembly, part of the 30S ribosomal subunit. Forms a tight heterodimer with protein bS6.

Functionally, binds as a heterodimer with protein bS6 to the central domain of the 16S rRNA, where it helps stabilize the platform of the 30S subunit. This is Small ribosomal subunit protein bS18B from Cupriavidus pinatubonensis (strain JMP 134 / LMG 1197) (Cupriavidus necator (strain JMP 134)).